Reading from the N-terminus, the 123-residue chain is Sterol carrier protein 2 (123 aa).

Residues 16-113 (KEHLSTDAGK…GSLSAAQKFT (98 aa)) enclose the SCP2 domain. The short motif at 121 to 123 (SKL) is the Microbody targeting signal element.

Expressed in most tissues including seedlings, cotyledons, inflorescence, leaves, stems, roots, siliques and flower buds, with the highest levels in floral tissues and in maturing seeds.

It localises to the peroxisome. In terms of biological role, enhances the transfer of lipids between membranes in vitro. Active on phosphatidylcholine (PC), 1-palmitoyl 2-oleoyl phosphatidylcholine (POPC) and ergosterol, and, to a lower extent, dimyristoyl phosphatidic acid, stigmasterol, desmosterol, beta-sitosterol and steryl glucoside. Inactive or poorly active on palmitic acid, stearoyl-coenzyme A, cholesterol, glucosylceramide and ceramide. Required during seeds and seedlings development. The chain is Sterol carrier protein 2 from Arabidopsis thaliana (Mouse-ear cress).